The sequence spans 217 residues: Glutathione S-transferase (217 aa).

The GST N-terminal domain maps to 2–82 (TIKVHGNPRS…YLAYTHDHQN (81 aa)). Residues serine 11, 40–41 (HK), 53–54 (QV), and 66–67 (ES) each bind glutathione. Residues 91–217 (EKHEMAAQLV…EKTLALQKQA (127 aa)) form the GST C-terminal domain.

It belongs to the GST superfamily. Phi family.

The protein resides in the cytoplasm. The catalysed reaction is RX + glutathione = an S-substituted glutathione + a halide anion + H(+). Functionally, conjugation of reduced glutathione to a wide number of exogenous and endogenous hydrophobic electrophiles. This is Glutathione S-transferase (GST) from Silene vulgaris (Bladder campion).